The sequence spans 465 residues: Putative apoptosis inhibitor ORF106 (465 aa).

One copy of the BIR repeat lies at Arg-291–Glu-357. Residues Glu-373–Gly-382 show a composition bias toward acidic residues. The interval Glu-373–Asn-393 is disordered. Residues Cys-405–Arg-447 form an RING-type zinc finger.

The polypeptide is Putative apoptosis inhibitor ORF106 (Magallana gigas (Pacific oyster)).